A 248-amino-acid polypeptide reads, in one-letter code: Mannose-binding protein C (248 aa).

The signal sequence occupies residues 1–20 (MSLFPSLPLLLLSVVAASYS). Residues 42-99 (GINGFPGKDGRDGTKGEKGEPGQGLRGLQGPPGKLGPPGNPGPSGSPGPKGQKGDPGK) form the Collagen-like domain. The interval 43 to 111 (INGFPGKDGR…DCDSSLAASE (69 aa)) is disordered. Position 47 is a 4-hydroxyproline (P47). The segment covering 49–61 (KDGRDGTKGEKGE) has biased composition (basic and acidic residues). P73, P79, P82, and P88 each carry 4-hydroxyproline. The span at 75–87 (KLGPPGNPGPSGS) shows a compositional bias: pro residues. Over residues 93 to 102 (QKGDPGKSPD) the composition is skewed to basic and acidic residues. Residues 112-130 (RKALQTEMARIKKWLTFSL) are a coiled coil. The 112-residue stretch at 134-245 (VGNKFFLTNG…CSSSHLAVCE (112 aa)) folds into the C-type lectin domain. 2 cysteine pairs are disulfide-bonded: C155-C244 and C222-C236.

As to quaternary structure, oligomeric complex of 3 or more homotrimers. Interacts with MASP1 and MASP2. Interacts with MEP1A and MEP1B and may inhibit their catalytic activity. Post-translationally, hydroxylation on proline residues within the sequence motif, GXPG, is most likely to be 4-hydroxy as this fits the requirement for 4-hydroxylation in vertebrates.

The protein resides in the secreted. Functionally, calcium-dependent lectin involved in innate immune defense. Binds mannose, fucose and N-acetylglucosamine on different microorganisms and activates the lectin complement pathway. Binds to late apoptotic cells, as well as to apoptotic blebs and to necrotic cells, but not to early apoptotic cells, facilitating their uptake by macrophages. The polypeptide is Mannose-binding protein C (MBL2) (Pongo pygmaeus (Bornean orangutan)).